The following is a 409-amino-acid chain: Broad specificity amino-acid racemase (409 aa).

The N-terminal stretch at Met1–Ala24 is a signal peptide. A disulfide bond links Cys71 and Cys97. Residue Lys75 is the Proton acceptor of the active site. Lys75 carries the post-translational modification N6-(pyridoxal phosphate)lysine. Arg174 provides a ligand contact to substrate. Tyr301 serves as the catalytic Proton acceptor. Met349 is a binding site for substrate.

The protein belongs to the alanine racemase family. Bsr subfamily. As to quaternary structure, monomer. Forms a head-to-tail homodimer in the structure. Pyridoxal 5'-phosphate is required as a cofactor.

It localises to the periplasm. The catalysed reaction is an L-alpha-amino acid = a D-alpha-amino acid. It carries out the reaction L-lysine = D-lysine. The enzyme catalyses L-arginine = D-arginine. It catalyses the reaction L-alanine = D-alanine. Activity is enhanced by Co(2+), Mn(2+) and Sr(2+), and decreased by Cu(2+). Amino-acid racemase that catalyzes the interconversion of L-lysine and D-lysine, and L-arginine and D-arginine. To a lesser extent, is also able to interconvert alanine and isoleucine enantiomers. This is Broad specificity amino-acid racemase from Pseudomonas putida (Arthrobacter siderocapsulatus).